A 191-amino-acid polypeptide reads, in one-letter code: Shikimate kinase (191 aa).

Gly14–Thr19 contacts ATP. Ser18 lines the Mg(2+) pocket. Substrate-binding residues include Asp36, Arg60, and Gly82. ATP is bound at residue Arg120. Arg147 contacts substrate.

The protein belongs to the shikimate kinase family. As to quaternary structure, monomer. Mg(2+) is required as a cofactor.

The protein resides in the cytoplasm. It carries out the reaction shikimate + ATP = 3-phosphoshikimate + ADP + H(+). Its pathway is metabolic intermediate biosynthesis; chorismate biosynthesis; chorismate from D-erythrose 4-phosphate and phosphoenolpyruvate: step 5/7. Its function is as follows. Catalyzes the specific phosphorylation of the 3-hydroxyl group of shikimic acid using ATP as a cosubstrate. In Chlorobaculum tepidum (strain ATCC 49652 / DSM 12025 / NBRC 103806 / TLS) (Chlorobium tepidum), this protein is Shikimate kinase.